The chain runs to 416 residues: Casein kinase I isoform epsilon (416 aa).

One can recognise a Protein kinase domain in the interval 9–277; the sequence is YRLGRKIGSG…YLRQLFRNLF (269 aa). ATP is bound by residues 15–23 and lysine 38; that span reads IGSGSFGDI. The active-site Proton acceptor is aspartate 128. A compositionally biased stretch (basic and acidic residues) spans 301–318; the sequence is PEDVDRERREHEREERMG. The interval 301 to 416 is disordered; the sequence is PEDVDRERRE…TSVPFDHLGK (116 aa). 2 positions are modified to phosphoserine: serine 343 and serine 354. Positions 351 to 365 are enriched in polar residues; the sequence is TPASRIQQTGNTSPR. Phosphothreonine is present on threonine 362. Phosphoserine is present on serine 363. An Omega-N-methylarginine modification is found at arginine 382. Phosphoserine is present on residues serine 389, serine 405, and serine 408.

This sequence belongs to the protein kinase superfamily. CK1 Ser/Thr protein kinase family. Casein kinase I subfamily. In terms of assembly, monomer. Component of the circadian core oscillator, which includes the CRY proteins, CLOCK, or NPAS2, ARTNL/BMAL1 or ARTNL2/BMAL2, CSNK1D and/or CSNK1E, TIMELESS and the PER proteins. Interacts with ANKRD6. Interacts with PER1. Interacts with DBNDD2, LRP5, LRP6 and SOCS3. Interacts with SNAI1 (via zinc fingers). Interacts with DDX3X; this interaction greatly enhances CSNK1E affinity for ATP and DVL2 phosphorylation, but inhibits DDX3X ATPase/helicase activity. In the presence of RNA, the interaction is decreased. Interacts with FAM83A, FAM83B, FAM83E and FAM83H (via DUF1669). Autophosphorylated. Partially dephosphorylated by PPP5C. May be dephosphorylated by PP1. Expressed in all tissues examined, including brain, heart, lung, liver, pancreas, kidney, placenta and skeletal muscle. Expressed in monocytes and lymphocytes but not in granulocytes.

Its subcellular location is the cytoplasm. The protein resides in the nucleus. The enzyme catalyses L-seryl-[protein] + ATP = O-phospho-L-seryl-[protein] + ADP + H(+). It catalyses the reaction L-threonyl-[protein] + ATP = O-phospho-L-threonyl-[protein] + ADP + H(+). Its activity is regulated as follows. Phosphorylation leads to a decrease in the catalytic activity. Functionally, casein kinases are operationally defined by their preferential utilization of acidic proteins such as caseins as substrates. Participates in Wnt signaling. Phosphorylates DVL1. Phosphorylates DVL2. Phosphorylates NEDD9/HEF1. Central component of the circadian clock. In balance with PP1, determines the circadian period length, through the regulation of the speed and rhythmicity of PER1 and PER2 phosphorylation. Controls PER1 and PER2 nuclear transport and degradation. Inhibits cytokine-induced granuloytic differentiation. In Mus musculus (Mouse), this protein is Casein kinase I isoform epsilon (Csnk1e).